We begin with the raw amino-acid sequence, 353 residues long: MPSSRTCVGVVFGGASEEHAVSIRSAITVVGALRSEVNNNRFEVIAIYIDQRGRWWPAGVAEAVLKQGHPAKPEQLSTPLAPQGFTKLPEGSERVQVWYPVLHGPNGEDGTVQGLFTLMGQPFVGSGVLGSALSMDKLAMKAAFAAAGLPQVPYAAVDAADLLETESRQGVAKHLEAKLKYPCFVKPANLGSSVGISKAQNRNELLIGLDKAASLDRRIVVEQGVSARELECAVLGKRELQTSVVGEICFDADWYDYDTKYSENCSHTLIPAPLPEGVEAQIRTLALQACRCVAAHGMARVDFFYNAARNEIWLNEINTLPGFTSQSMYPMLWEASGVTLEELVSQLVITARE.

The region spanning 141-349 (KAAFAAAGLP…LEELVSQLVI (209 aa)) is the ATP-grasp domain. ATP is bound at residue 176-231 (EAKLKYPCFVKPANLGSSVGISKAQNRNELLIGLDKAASLDRRIVVEQGVSARELE). Residues aspartate 302, glutamate 316, and asparagine 318 each coordinate Mg(2+).

The protein belongs to the D-alanine--D-alanine ligase family. It depends on Mg(2+) as a cofactor. The cofactor is Mn(2+).

It is found in the cytoplasm. It carries out the reaction 2 D-alanine + ATP = D-alanyl-D-alanine + ADP + phosphate + H(+). It functions in the pathway cell wall biogenesis; peptidoglycan biosynthesis. Its function is as follows. Cell wall formation. The chain is D-alanine--D-alanine ligase from Prochlorococcus marinus (strain MIT 9313).